The following is a 383-amino-acid chain: V-type proton ATPase subunit C 1-A (383 aa).

The residue at position 2 (T2) is an N-acetylthreonine.

This sequence belongs to the V-ATPase C subunit family. In terms of assembly, V-ATPase is a heteromultimeric enzyme made up of two complexes: the ATP-hydrolytic V1 complex and the proton translocation V0 complex. The V1 complex consists of three catalytic AB heterodimers that form a heterohexamer, three peripheral stalks each consisting of EG heterodimers, one central rotor including subunits D and F, and the regulatory subunits C and H. The proton translocation complex V0 consists of the proton transport subunit a, a ring of proteolipid subunits c9c'', rotary subunit d, subunits e and f, and two accessory subunits.

Functionally, subunit of the V1 complex of vacuolar(H+)-ATPase (V-ATPase), a multisubunit enzyme composed of a peripheral complex (V1) that hydrolyzes ATP and a membrane integral complex (V0) that translocates protons. V-ATPase is responsible for acidifying and maintaining the pH of intracellular compartments and in some cell types, is targeted to the plasma membrane, where it is responsible for acidifying the extracellular environment. Subunit C is necessary for the assembly of the catalytic sector of the enzyme and is likely to have a specific function in its catalytic activity. The protein is V-type proton ATPase subunit C 1-A (atp6v1c1a) of Danio rerio (Zebrafish).